The sequence spans 853 residues: MAGPRGALLAWCRRQCEGYRGVDIRDLSSSFRDGLAFCAILHRHRPDLLDFDSLSKDNVFENNRLAFEVAEKELGIPALLDPNDMVSMSVPDCLSIMTYVSQYYNHFAGSGPAGVSSPRKGLVLSSPPSEASTPADPGDRAQGEECSSGSLSKQGSHRTPSSTCAACQQHVHLVQRYLADGKLYHRHCFRCRRCSSTLLPGAYRNGPEEGTFVCAEHCARLGPSGRSGARPGTPPQPKQQQLTEEAKEVEGGSPSPKATAGAEADVPKASPEGRPQVPTKPRVPGRPQELASPPASRPTPAPRKASESTAPTPPTPRPRSSLQQENLVEQGGGSGLVNGKLQEPPIPKPRGTPKLSERTPAPRKDPPWITLVQAEPKKKPAPLPPSSSPGPPPGQEGRQVENGGVDKAAPRGPEPKPYNPFEEEEEEPPAAPSPAPGPAPTPPESTPKSLHPWYGITPTSSPKTKKRPAPRAPSTSPLTLHASRLSRSEPPSATPSPALSVESLSSESSSQAPSEELLEPPVVPKSSSEPAVHAPGTPGTSASLSANSSLSSSGELVQPSMDRTPQASPGLAPNSRGSPGPPPAKPCSGTAPTPLVLVGDKSPAPSPGTSSPQLQVKSSCKENPFNRKPSPTASPSVKKATKGSKPARPPAPGHGFPLIKRKVQSDQYIPEEDIHGEIDTIERQLDALEHRGVLLEEKLRGGVNEGREDDMLVDWFKLIHEKHLLVRRESELIYVFKQQNLEQRQADVEYELRCLLNKPEKDWTEEDRGREKVLMQELVTLIEQRNAIVNCLDEDRQREEEEDKMLEAMIKKKEFQKETEPEGKKKGKFKTMKVLKLLGNKRDTKSKCPGDRS.

Residues 2-108 (AGPRGALLAW…YVSQYYNHFA (107 aa)) form the Calponin-homology (CH) domain. Disordered stretches follow at residues 118 to 162 (PRKG…TPSS) and 224 to 659 (SGRS…FPLI). A compositionally biased stretch (polar residues) spans 145–162 (ECSSGSLSKQGSHRTPSS). In terms of domain architecture, LIM zinc-binding spans 162 to 224 (STCAACQQHV…AEHCARLGPS (63 aa)). Residues Ser-292 and Ser-306 each carry the phosphoserine modification. Phosphothreonine occurs at positions 312 and 315. A compositionally biased stretch (basic and acidic residues) spans 355–366 (LSERTPAPRKDP). Residues 381-394 (APLPPSSSPGPPPG) are compositionally biased toward pro residues. The residue at position 388 (Ser-388) is a Phosphoserine. The NPF1 signature appears at 419 to 421 (NPF). Positions 429–445 (PAAPSPAPGPAPTPPES) are enriched in pro residues. Phosphothreonine occurs at positions 457 and 459. Ser-460, Ser-461, Ser-474, and Ser-476 each carry phosphoserine. Composition is skewed to low complexity over residues 495–515 (PSPALSVESLSSESSSQAPSE) and 541–553 (SASLSANSSLSSS). Residues Ser-568 and Ser-611 each carry the phosphoserine modification. Polar residues predominate over residues 607 to 618 (PGTSSPQLQVKS). Residues 623 to 625 (NPF) carry the NPF2 motif. Residues 642-853 (KGSKPARPPA…TKSKCPGDRS (212 aa)) are mediates the interaction with RAB13 and RAB35 and intramolecular interaction with the CH domain. One can recognise a bMERB domain in the interval 661-808 (RKVQSDQYIP…EEEEDKMLEA (148 aa)). The stretch at 671–701 (EEDIHGEIDTIERQLDALEHRGVLLEEKLRG) forms a coiled coil. The segment at 690-853 (HRGVLLEEKL…TKSKCPGDRS (164 aa)) is necessary and sufficient to associate with tubular recycling endosome membranes, mediate phosphatidic acid-binding and membrane tubulation. Ser-730 is modified (phosphoserine). Residues 791 to 820 (CLDEDRQREEEEDKMLEAMIKKKEFQKETE) are a coiled coil.

As to quaternary structure, homooligomer. Interacts (via NPF1 motif) with EHD1 (via EH domain); the interaction is direct and probably recruits EHD1 to membranes. Interacts with EHD3 (via EH domain). Interacts with RAB35 (GTP-bound form); the interaction is direct and probably recruits MICALL1 to membranes. Interacts with ACAP2; the interaction is indirect through RAB35. Interacts with RAB8A (GTP-bound form); regulates RAB8A association with recycling endosomes. Interacts with RAB13 (GTP-bound form). Interacts with ARF6 (GTP-bound form). Interacts with PACSIN2 (via the SH3 domain). Interacts with DPYSL2.

It localises to the recycling endosome membrane. Its subcellular location is the late endosome membrane. The protein resides in the cell projection. The protein localises to the cilium membrane. It is found in the cytoplasm. It localises to the cytoskeleton. Its subcellular location is the microtubule organizing center. The protein resides in the centrosome. The protein localises to the centriole. In terms of biological role, lipid-binding protein with higher affinity for phosphatidic acid, a lipid enriched in recycling endosome membranes. On endosome membranes, acts as a downstream effector of Rab proteins recruiting cytosolic proteins to regulate membrane tubulation. Involved in a late step of receptor-mediated endocytosis regulating for instance endocytosed-EGF receptor trafficking. Alternatively, regulates slow endocytic recycling of endocytosed proteins back to the plasma membrane. Also involved in cargo protein delivery to the plasma membrane. Plays a role in ciliogenesis coordination, recruits EHD1 to primary cilium where it is anchored to the centriole through interaction with tubulins. May indirectly play a role in neurite outgrowth. This is MICAL-like protein 1 (MICALL1) from Bos taurus (Bovine).